Reading from the N-terminus, the 135-residue chain is ATP synthase epsilon chain (135 aa).

Belongs to the ATPase epsilon chain family. In terms of assembly, F-type ATPases have 2 components, CF(1) - the catalytic core - and CF(0) - the membrane proton channel. CF(1) has five subunits: alpha(3), beta(3), gamma(1), delta(1), epsilon(1). CF(0) has three main subunits: a, b and c.

It localises to the cell inner membrane. Functionally, produces ATP from ADP in the presence of a proton gradient across the membrane. The protein is ATP synthase epsilon chain of Bradyrhizobium sp. (strain BTAi1 / ATCC BAA-1182).